Here is a 464-residue protein sequence, read N- to C-terminus: MTVKTRFAPSPTGYLHIGGVRTALFSWAFARHHKGEFLLRIEDTDLARSTAESVNIILDGMKWVGLNYDNADNVVYQTRRFDRYKEVIAELLEKGHAYYCYCSKEELEAMREKAEKEGTATYDRRWRPEAGKTLPEIPAGVQPVVRFKTPLDGVTKWADLVKGEISIPNEALDDLIIARADGTPTYNFCVVVDDYDMGVTHVIRGDDHVNNTPKQINILKAIGANLPEYGHLPMILNEQGKKISKRSGDTVAITDFGAMGILPEAMLNYLARLGWAHGDDEFFTMEQFIEWFDLKDVSPSPSRMDLKKLYWINGEHIKITTNEKLAEMVKPRLALRDIHETSKPALEDVLALVKDRAQDLNALADECLYFYKKQVPAEADVAKHWDDEASARMLRFAERLEGLEDWNTEAIHDLFKPFCDEEGIKMGKLGMPLRLAVCGTAKTPSVDAVLALIGKEEVLKRIRA.

The 'HIGH' region signature appears at 9 to 19; it reads PSPTGYLHIGG. Positions 242-246 match the 'KMSKS' region motif; it reads KISKR. Lys245 is an ATP binding site.

The protein belongs to the class-I aminoacyl-tRNA synthetase family. Glutamate--tRNA ligase type 1 subfamily. In terms of assembly, monomer.

Its subcellular location is the cytoplasm. It catalyses the reaction tRNA(Glu) + L-glutamate + ATP = L-glutamyl-tRNA(Glu) + AMP + diphosphate. Catalyzes the attachment of glutamate to tRNA(Glu) in a two-step reaction: glutamate is first activated by ATP to form Glu-AMP and then transferred to the acceptor end of tRNA(Glu). In Neisseria meningitidis serogroup C / serotype 2a (strain ATCC 700532 / DSM 15464 / FAM18), this protein is Glutamate--tRNA ligase.